The primary structure comprises 601 residues: tRNA 5-methylaminomethyl-2-thiouridine biosynthesis bifunctional protein MnmC (601 aa).

A tRNA (mnm(5)s(2)U34)-methyltransferase region spans residues 1–237 (MSDPTASPLI…KKQRLEAVAP (237 aa)). Residues 252–601 (IGGGIAGAAM…FSSRVATGAV (350 aa)) form an FAD-dependent cmnm(5)s(2)U34 oxidoreductase region.

It in the N-terminal section; belongs to the methyltransferase superfamily. tRNA (mnm(5)s(2)U34)-methyltransferase family. The protein in the C-terminal section; belongs to the DAO family. FAD is required as a cofactor.

It localises to the cytoplasm. The enzyme catalyses 5-aminomethyl-2-thiouridine(34) in tRNA + S-adenosyl-L-methionine = 5-methylaminomethyl-2-thiouridine(34) in tRNA + S-adenosyl-L-homocysteine + H(+). Functionally, catalyzes the last two steps in the biosynthesis of 5-methylaminomethyl-2-thiouridine (mnm(5)s(2)U) at the wobble position (U34) in tRNA. Catalyzes the FAD-dependent demodification of cmnm(5)s(2)U34 to nm(5)s(2)U34, followed by the transfer of a methyl group from S-adenosyl-L-methionine to nm(5)s(2)U34, to form mnm(5)s(2)U34. This chain is tRNA 5-methylaminomethyl-2-thiouridine biosynthesis bifunctional protein MnmC, found in Caulobacter sp. (strain K31).